The chain runs to 509 residues: Cytochrome P450 6A1 (509 aa).

A heme-binding site is contributed by Cys-449.

It belongs to the cytochrome P450 family. Requires heme as cofactor.

It is found in the endoplasmic reticulum membrane. It localises to the microsome membrane. The enzyme catalyses an organic molecule + reduced [NADPH--hemoprotein reductase] + O2 = an alcohol + oxidized [NADPH--hemoprotein reductase] + H2O + H(+). Involved in the metabolism of insect hormones and in the breakdown of synthetic insecticides. The polypeptide is Cytochrome P450 6A1 (CYP6A1) (Musca domestica (House fly)).